The chain runs to 239 residues: Small ribosomal subunit protein uS3 (239 aa).

The KH type-2 domain maps to Val39–Arg107. The interval Ser214 to Arg239 is disordered. The segment covering Glu216–Arg239 has biased composition (basic and acidic residues).

The protein belongs to the universal ribosomal protein uS3 family. As to quaternary structure, part of the 30S ribosomal subunit. Forms a tight complex with proteins S10 and S14.

In terms of biological role, binds the lower part of the 30S subunit head. Binds mRNA in the 70S ribosome, positioning it for translation. This Xylella fastidiosa (strain M23) protein is Small ribosomal subunit protein uS3.